A 199-amino-acid chain; its full sequence is Recombination protein RecR (199 aa).

The segment at 58–73 adopts a C4-type zinc-finger fold; sequence CRICYNITDTEVCNIC. Positions 81-176 constitute a Toprim domain; that stretch reads SLICVVSHPM…KVTRIAHGVP (96 aa).

This sequence belongs to the RecR family.

Its function is as follows. May play a role in DNA repair. It seems to be involved in an RecBC-independent recombinational process of DNA repair. It may act with RecF and RecO. This Thermoanaerobacter pseudethanolicus (strain ATCC 33223 / 39E) (Clostridium thermohydrosulfuricum) protein is Recombination protein RecR.